Here is a 443-residue protein sequence, read N- to C-terminus: Threonine/serine transporter TdcC (443 aa).

Transmembrane regions (helical) follow at residues 22-42 (TTWTLGLFGTAIGAGVLFFPI), 44-64 (AGFGGLIPILLMLVLAYPIAF), 97-117 (GVVITFLYFFAICPLLWIYGV), 140-160 (FVALFLLLLMAFVIWFGKDLM), 163-183 (VMSYLVWPFIASLVLISLSLI), 207-227 (ILITVWLGISIMVFSFNFSPI), 261-281 (MLMVAVVMFFAFSCLFTLSPA), 312-332 (AITLEYAASIIALVAIFKSFF), 366-386 (ISMIFIMGSTWVVAYANPNIL), 389-409 (IEAMGAPIIASLLCLLPMYAI), and 423-443 (DNVFVTVIGLLTILNIVYKLF).

This sequence belongs to the amino acid/polyamine transporter 2 family. SdaC/TdcC subfamily.

Its subcellular location is the cell inner membrane. It catalyses the reaction L-threonine(in) + H(+)(in) = L-threonine(out) + H(+)(out). The catalysed reaction is L-serine(in) + H(+)(in) = L-serine(out) + H(+)(out). Involved in the import of threonine and serine into the cell, with the concomitant import of a proton (symport system). This chain is Threonine/serine transporter TdcC, found in Escherichia coli O45:K1 (strain S88 / ExPEC).